The chain runs to 274 residues: Thiazole synthase (274 aa).

The active-site Schiff-base intermediate with DXP is lysine 111. Residues glycine 172, 198-199 (AG), and 220-221 (NS) contribute to the 1-deoxy-D-xylulose 5-phosphate site. The disordered stretch occupies residues 251–274 (RLPERAAASPSSPTTGIIAEAKTK).

Belongs to the ThiG family. In terms of assembly, homotetramer. Forms heterodimers with either ThiH or ThiS.

The protein resides in the cytoplasm. The enzyme catalyses [ThiS sulfur-carrier protein]-C-terminal-Gly-aminoethanethioate + 2-iminoacetate + 1-deoxy-D-xylulose 5-phosphate = [ThiS sulfur-carrier protein]-C-terminal Gly-Gly + 2-[(2R,5Z)-2-carboxy-4-methylthiazol-5(2H)-ylidene]ethyl phosphate + 2 H2O + H(+). Its pathway is cofactor biosynthesis; thiamine diphosphate biosynthesis. In terms of biological role, catalyzes the rearrangement of 1-deoxy-D-xylulose 5-phosphate (DXP) to produce the thiazole phosphate moiety of thiamine. Sulfur is provided by the thiocarboxylate moiety of the carrier protein ThiS. In vitro, sulfur can be provided by H(2)S. This Prochlorococcus marinus (strain MIT 9313) protein is Thiazole synthase.